We begin with the raw amino-acid sequence, 142 residues long: Large ribosomal subunit protein uL11 (142 aa).

Belongs to the universal ribosomal protein uL11 family. In terms of assembly, part of the ribosomal stalk of the 50S ribosomal subunit. Interacts with L10 and the large rRNA to form the base of the stalk. L10 forms an elongated spine to which L12 dimers bind in a sequential fashion forming a multimeric L10(L12)X complex. Post-translationally, one or more lysine residues are methylated.

Functionally, forms part of the ribosomal stalk which helps the ribosome interact with GTP-bound translation factors. The protein is Large ribosomal subunit protein uL11 of Dictyoglomus turgidum (strain DSM 6724 / Z-1310).